Reading from the N-terminus, the 346-residue chain is Biotin synthase (346 aa).

Residues 38-256 (RQVQVSTLLS…IAVARIMMPT (219 aa)) form the Radical SAM core domain. Positions 53, 57, and 60 each coordinate [4Fe-4S] cluster. Cys-97, Cys-128, Cys-188, and Arg-260 together coordinate [2Fe-2S] cluster.

It belongs to the radical SAM superfamily. Biotin synthase family. Homodimer. [4Fe-4S] cluster is required as a cofactor. [2Fe-2S] cluster serves as cofactor.

The catalysed reaction is (4R,5S)-dethiobiotin + (sulfur carrier)-SH + 2 reduced [2Fe-2S]-[ferredoxin] + 2 S-adenosyl-L-methionine = (sulfur carrier)-H + biotin + 2 5'-deoxyadenosine + 2 L-methionine + 2 oxidized [2Fe-2S]-[ferredoxin]. Its pathway is cofactor biosynthesis; biotin biosynthesis; biotin from 7,8-diaminononanoate: step 2/2. Functionally, catalyzes the conversion of dethiobiotin (DTB) to biotin by the insertion of a sulfur atom into dethiobiotin via a radical-based mechanism. The sequence is that of Biotin synthase from Escherichia coli O6:K15:H31 (strain 536 / UPEC).